Reading from the N-terminus, the 880-residue chain is MVKILEKIFGTKNERELKRYFTIVEDINRLESQISSLSDEKLKQKTDEFRERLAKGESLDDILKEAFAVVREVAKRTLGMRHFDVQLVGGLVLHEGKIAEMKTGEGKTLVATLAAYLNALEGKGVHIVTVNDYLARRDVQWMGAIYNFLGLSVGVIQPDASFLYDPNYRLPDRRFDRLRPCSKKEAYLADITYGTNNEFGFDYLRDNMRYSIDELCQRELNYAIVDEVDSILIDEARTPLIISGPSEESTDIYYAVNRIIKYLKPENDFKLDEKLKTVVLTEQGSQKAEKLLGIDNLYNPSNIQVVHHINQAIRAHYFFKKEVDYVVKDGKIVIVDEFTGRLLEGRRWSDGLHQAIEAKEGLKIEAENQTLATITFQNYFRMYKKLAGMTGTADTEASEFAEIYNLEVVVIPTHKPMIREDYPDAVYKTEKAKYEAVVKEIEECYKVGRPVLVGTTSIEKSELISKMLKKKGVPHNVLNAKYHDKEAEIVAQAGRIGAVTIATNMAGRGTDILLGGNPEFLAREMLAGKDYTEEEYKKALEKAKEICKEEHDKVVSLGGLHIIGTERHESRRIDNQLRGRAGRQGDPGSSRFYLSLEDELLRLFGGERLQSLMHFLKIEDDTPIENKMVSKAIENAQKRVEAHNFDIRKHLLKYDDVMNSQRNEIYSFRKEVLESDSLKDKVFELLEIEIDEMVDFYLAQESEGVEKLKEQLSARFDIEVDLSNKSKDEIKEYLLEKLREAYEKKEQKIGQELMRDVEKMIFLHVIDTKWKDHLLGIDHIKEGIGLRGYAQRDPLVEYKKEAFELFEEMSRNIISDILTRLFKIQIKEESQVKVARAQKIQRSDGDGARRPVEKPKKIGRNDPCPCGSGKKYKKCCGKNS.

ATP is bound by residues Gln86, 104 to 108 (GEGKT), and Asp511. Residues 837 to 871 (AQKIQRSDGDGARRPVEKPKKIGRNDPCPCGSGKK) form a disordered region. Basic and acidic residues predominate over residues 841 to 860 (QRSDGDGARRPVEKPKKIGR). 4 residues coordinate Zn(2+): Cys864, Cys866, Cys875, and Cys876.

This sequence belongs to the SecA family. As to quaternary structure, monomer and homodimer. Part of the essential Sec protein translocation apparatus which comprises SecA, SecYEG and auxiliary proteins SecDF. Other proteins may also be involved. Zn(2+) serves as cofactor.

Its subcellular location is the cell inner membrane. The protein localises to the cytoplasm. The catalysed reaction is ATP + H2O + cellular proteinSide 1 = ADP + phosphate + cellular proteinSide 2.. Its function is as follows. Part of the Sec protein translocase complex. Interacts with the SecYEG preprotein conducting channel. Has a central role in coupling the hydrolysis of ATP to the transfer of proteins into and across the cell membrane, serving as an ATP-driven molecular motor driving the stepwise translocation of polypeptide chains across the membrane. This chain is Protein translocase subunit SecA, found in Thermodesulfovibrio yellowstonii (strain ATCC 51303 / DSM 11347 / YP87).